A 112-amino-acid chain; its full sequence is Citrate synthase (112 aa).

Active-site residues include His39 and Asp97.

The protein belongs to the citrate synthase family.

It catalyses the reaction oxaloacetate + acetyl-CoA + H2O = citrate + CoA + H(+). Its pathway is carbohydrate metabolism; tricarboxylic acid cycle; isocitrate from oxaloacetate: step 1/2. This Bartonella vinsonii subsp. berkhoffii protein is Citrate synthase (gltA).